A 1354-amino-acid polypeptide reads, in one-letter code: Tensin homolog (1354 aa).

The Phosphatase tensin-type domain maps to 38–207; sequence MKDRKEGVQV…GYFSSLLSGR (170 aa). The Phosphocysteine intermediate role is filled by C144. The C2 tensin-type domain occupies 212-337; it reads SDPLYLHNII…VTVELVVSHT (126 aa). Disordered regions lie at residues 380 to 442, 597 to 616, 638 to 660, 692 to 720, 734 to 754, 794 to 879, and 1015 to 1035; these read EYSE…DVVP, STLQ…RTLN, SNTA…SVQL, DVRG…NNTP, SVTT…EADA, AANN…DRQR, and NGER…HNGY. Residues 391 to 401 show a composition bias toward polar residues; it reads SSKSANPINNN. The span at 408-417 shows a compositional bias: pro residues; sequence VGPPVPPKPS. Composition is skewed to polar residues over residues 704 to 720, 734 to 747, and 794 to 804; these read HNAS…NNTP, SVTT…STPS, and AANNDENQHNL. Residues 821–843 are compositionally biased toward basic and acidic residues; that stretch reads AEFRREEERLRNTRSPYGEERWR. A compositionally biased stretch (gly residues) spans 1017–1033; that stretch reads ERGGSGHAAGGGGGGHN. Residues 1083 to 1187 form the SH2 domain; it reads WYKPTISREQ…ALPTKLVLPD (105 aa). One can recognise a PTB domain in the interval 1209–1353; it reads ACNVVYVGSV…NKVMLAQKNR (145 aa).

It belongs to the PTEN phosphatase protein family. As to quaternary structure, may interact (via SH2 domain) with receptor svh-2 (when tyrosine-phosphorylated). May interact (via C-terminus) with integrin pat-3. Expressed in ventral motor neurons, including ventral and dorsal D-type neurons, and in a subset of cells in the head.

It localises to the cell projection. The protein resides in the axon. The enzyme catalyses O-phospho-L-tyrosyl-[protein] + H2O = L-tyrosyl-[protein] + phosphate. In terms of biological role, probable phosphatase which regulates axon regeneration after injury by linking the svh-2 and integrin signaling pathways. Not involved in axon regeneration after injury. The polypeptide is Tensin homolog (Caenorhabditis elegans).